Consider the following 190-residue polypeptide: Endoribonuclease YbeY (190 aa).

His147, His151, and His157 together coordinate Zn(2+).

The protein belongs to the endoribonuclease YbeY family. It depends on Zn(2+) as a cofactor.

Its subcellular location is the cytoplasm. Functionally, single strand-specific metallo-endoribonuclease involved in late-stage 70S ribosome quality control and in maturation of the 3' terminus of the 16S rRNA. The polypeptide is Endoribonuclease YbeY (Nitrobacter winogradskyi (strain ATCC 25391 / DSM 10237 / CIP 104748 / NCIMB 11846 / Nb-255)).